Reading from the N-terminus, the 194-residue chain is Endonuclease V (194 aa).

Asp-31 and Glu-95 together coordinate Mg(2+).

Belongs to the endonuclease V family. Mg(2+) is required as a cofactor.

It is found in the cytoplasm. It carries out the reaction Endonucleolytic cleavage at apurinic or apyrimidinic sites to products with a 5'-phosphate.. Functionally, DNA repair enzyme involved in the repair of deaminated bases. Selectively cleaves double-stranded DNA at the second phosphodiester bond 3' to a deoxyinosine leaving behind the intact lesion on the nicked DNA. In Pyrococcus abyssi (strain GE5 / Orsay), this protein is Endonuclease V.